A 416-amino-acid polypeptide reads, in one-letter code: Hepatic and glial cell adhesion molecule (416 aa).

An N-terminal signal peptide occupies residues 1–33 (MKRERGALSRASRALRLAPFVYLLLIQTDPLEG). Residues 34 to 142 (VNITSPVRLI…GEKTINLTVD (109 aa)) form the Ig-like V-type domain. At 34 to 240 (VNITSPVRLI…VKITVYRRSS (207 aa)) the chain is on the extracellular side. 4 N-linked (GlcNAc...) asparagine glycosylation sites follow: Asn35, Asn138, Asn167, and Asn189. The Ig-like C2-type domain occupies 148-234 (PQVLVASTTV…QGRSLPVKIT (87 aa)). Cysteines 168 and 217 form a disulfide. The chain crosses the membrane as a helical span at residues 241 to 261 (LYIILSTGGIFLLVTLVTVCA). The Cytoplasmic segment spans residues 262 to 416 (CWKPSKRKQK…DEAGPVEISA (155 aa)). The tract at residues 273 to 416 (LEKQNSLEYM…DEAGPVEISA (144 aa)) is disordered. Ser278 bears the Phosphoserine mark. The span at 285–306 (NDDRLKPEADTLPRSGEQERKN) shows a compositional bias: basic and acidic residues. Residues Ser350 and Ser377 each carry the phosphoserine modification. Positions 383–398 (SSPGRSRSASRTLRTA) are enriched in low complexity.

In terms of assembly, homodimer. Dimer formation occurs predominantly through cis interactions on the cell surface. Part of a complex containing MLC1, TRPV4, AQP4 and ATP1B1. Interacts with CLCN2. N-glycosylated.

The protein localises to the cytoplasm. Its subcellular location is the cell membrane. Functionally, involved in regulating cell motility and cell-matrix interactions. May inhibit cell growth through suppression of cell proliferation. In glia, associates and targets CLCN2 at astrocytic processes and myelinated fiber tracts where it may regulate transcellular chloride flux involved in neuron excitability. The protein is Hepatic and glial cell adhesion molecule of Homo sapiens (Human).